We begin with the raw amino-acid sequence, 1092 residues long: NAD-specific glutamate dehydrogenase (1092 aa).

The active site involves K626.

The protein belongs to the Glu/Leu/Phe/Val dehydrogenases family. Homotetramer. Interacts with NNK1. In terms of processing, phosphorylated by a complex containing the NNK1 kinase.

The catalysed reaction is L-glutamate + NAD(+) + H2O = 2-oxoglutarate + NH4(+) + NADH + H(+). Functionally, NAD(+)-dependent glutamate dehydrogenase which degrades glutamate to ammonia and alpha-ketoglutarate. The protein is NAD-specific glutamate dehydrogenase (GDH2) of Saccharomyces cerevisiae (strain ATCC 204508 / S288c) (Baker's yeast).